We begin with the raw amino-acid sequence, 215 residues long: Pyrrolidone-carboxylate peptidase 1 (215 aa).

Active-site residues include Glu-80, Cys-143, and His-167.

It belongs to the peptidase C15 family. As to quaternary structure, homotetramer.

The protein localises to the cytoplasm. It carries out the reaction Release of an N-terminal pyroglutamyl group from a polypeptide, the second amino acid generally not being Pro.. Removes 5-oxoproline from various penultimate amino acid residues except L-proline. This is Pyrrolidone-carboxylate peptidase 1 from Ralstonia nicotianae (strain ATCC BAA-1114 / GMI1000) (Ralstonia solanacearum).